The following is a 546-amino-acid chain: Carboxypeptidase Y homolog A (546 aa).

A signal peptide spans 1–17; sequence MKLLASTVLMGAAAASI. Positions 18–132 are excised as a propeptide; sequence APQQQVLKNP…KLEKYNMRAK (115 aa). 5 cysteine pairs are disulfide-bonded: Cys186-Cys426, Cys320-Cys334, Cys344-Cys367, Cys351-Cys360, and Cys389-Cys396. The N-linked (GlcNAc...) asparagine glycan is linked to Asn217. Ser273 is a catalytic residue. Asp465 is an active-site residue. N-linked (GlcNAc...) asparagine glycosylation is present at Asn512. Residue His523 is part of the active site.

Belongs to the peptidase S10 family.

The protein resides in the vacuole. It catalyses the reaction Release of a C-terminal amino acid with broad specificity.. Vacuolar carboxypeptidase involved in degradation of small peptides. Digests preferentially peptides containing an aliphatic or hydrophobic residue in P1' position, as well as methionine, leucine or phenylalanine in P1 position of ester substrate. This chain is Carboxypeptidase Y homolog A (cpyA), found in Sclerotinia sclerotiorum (strain ATCC 18683 / 1980 / Ss-1) (White mold).